The sequence spans 79 residues: MAKAELRKPKPKSNPLKAADITVIDYKDVALLRKFISDRGKIRARRVTGVTVQEQRKIAQAIKNAREVALLPYSGAGRG.

Belongs to the bacterial ribosomal protein bS18 family. Part of the 30S ribosomal subunit. Forms a tight heterodimer with protein bS6.

Binds as a heterodimer with protein bS6 to the central domain of the 16S rRNA, where it helps stabilize the platform of the 30S subunit. This chain is Small ribosomal subunit protein bS18, found in Pseudarthrobacter chlorophenolicus (strain ATCC 700700 / DSM 12829 / CIP 107037 / JCM 12360 / KCTC 9906 / NCIMB 13794 / A6) (Arthrobacter chlorophenolicus).